Here is an 81-residue protein sequence, read N- to C-terminus: Putative membrane protein insertion efficiency factor (81 aa).

The interval P59 to E81 is disordered.

This sequence belongs to the UPF0161 family.

It is found in the cell inner membrane. Could be involved in insertion of integral membrane proteins into the membrane. This chain is Putative membrane protein insertion efficiency factor, found in Azotobacter vinelandii (strain DJ / ATCC BAA-1303).